We begin with the raw amino-acid sequence, 245 residues long: tRNA (guanine-N(1)-)-methyltransferase (245 aa).

S-adenosyl-L-methionine contacts are provided by residues glycine 113 and 133–138 (IGDYVL).

Belongs to the RNA methyltransferase TrmD family. In terms of assembly, homodimer.

It is found in the cytoplasm. The catalysed reaction is guanosine(37) in tRNA + S-adenosyl-L-methionine = N(1)-methylguanosine(37) in tRNA + S-adenosyl-L-homocysteine + H(+). Specifically methylates guanosine-37 in various tRNAs. This is tRNA (guanine-N(1)-)-methyltransferase from Anoxybacillus flavithermus (strain DSM 21510 / WK1).